The following is a 779-amino-acid chain: Endonuclease MutS2 (779 aa).

328–335 serves as a coordination point for ATP; it reads GPNTGGKT. One can recognise a Smr domain in the interval 704–779; it reads LDLRGKRYEE…GSGATIVTLG (76 aa).

Belongs to the DNA mismatch repair MutS family. MutS2 subfamily. As to quaternary structure, homodimer. Binds to stalled ribosomes, contacting rRNA.

Endonuclease that is involved in the suppression of homologous recombination and thus may have a key role in the control of bacterial genetic diversity. Functionally, acts as a ribosome collision sensor, splitting the ribosome into its 2 subunits. Detects stalled/collided 70S ribosomes which it binds and splits by an ATP-hydrolysis driven conformational change. Acts upstream of the ribosome quality control system (RQC), a ribosome-associated complex that mediates the extraction of incompletely synthesized nascent chains from stalled ribosomes and their subsequent degradation. Probably generates substrates for RQC. This chain is Endonuclease MutS2, found in Streptococcus pyogenes serotype M18 (strain MGAS8232).